The following is a 333-amino-acid chain: Geminin coiled-coil domain-containing protein 1 (333 aa).

Residues 83 to 118 adopt a coiled-coil conformation; that stretch reads QLYRNKQLQDTLLQKEEELARLHEENNHLRQYLNST. Residues 145-154 show a composition bias toward basic residues; sequence KEKRKPKEHR. The segment at 145–165 is disordered; the sequence is KEKRKPKEHRHSPAEIPQFKT.

Belongs to the GEMC1 family. Highly phosphorylated by CDK2; stimulates initiation of DNA replication.

Its subcellular location is the nucleus. Its function is as follows. Regulator of DNA replication. Promotes initiation of chromosomal DNA replication by mediating TOPBP1- and CDK2-dependent recruitment of CDC45L onto replication origins. This is Geminin coiled-coil domain-containing protein 1 (Gmnc) from Mus musculus (Mouse).